The following is a 199-amino-acid chain: Nicotinamide riboside kinase 1 (199 aa).

An ATP-binding site is contributed by 10 to 18 (GVTNSGKTT). The Mg(2+) site is built by T17 and D36. D36 functions as the Proton acceptor in the catalytic mechanism. Residues 36–39 (DDFF) and 55–56 (YD) contribute to the substrate site. R128 contacts ATP. Substrate contacts are provided by residues R129 and 134 to 135 (YQ). Residues 132-134 (RVY) and 172-174 (KSE) each bind ATP.

Belongs to the uridine kinase family. NRK subfamily. In terms of assembly, monomer.

The catalysed reaction is beta-nicotinamide D-riboside + ATP = beta-nicotinamide D-ribonucleotide + ADP + H(+). The enzyme catalyses beta-D-ribosylnicotinate + ATP = nicotinate beta-D-ribonucleotide + ADP + H(+). It functions in the pathway cofactor biosynthesis; NAD(+) biosynthesis. Catalyzes the phosphorylation of nicotinamide riboside (NR) and nicotinic acid riboside (NaR) to form nicotinamide mononucleotide (NMN) and nicotinic acid mononucleotide (NaMN). The enzyme also phosphorylates the antitumor drugs tiazofurin and 3-deazaguanosine. The polypeptide is Nicotinamide riboside kinase 1 (NMRK1) (Homo sapiens (Human)).